The chain runs to 128 residues: Large ribosomal subunit protein mL51 (128 aa).

The N-terminal 31 residues, 1-31 (MAGSVPWAASRRLWGWVPSACRSFSLGVPRL), are a transit peptide targeting the mitochondrion.

This sequence belongs to the mitochondrion-specific ribosomal protein mL51 family. In terms of assembly, component of the mitochondrial ribosome large subunit (39S) which comprises a 16S rRNA and about 50 distinct proteins. Interacts with OXA1L.

It is found in the mitochondrion. The chain is Large ribosomal subunit protein mL51 (Mrpl51) from Mus musculus (Mouse).